A 167-amino-acid polypeptide reads, in one-letter code: Insertion element IS1 1 protein InsB (167 aa).

The protein belongs to the transposase 27 family.

Its function is as follows. Absolutely required for transposition of IS1. The polypeptide is Insertion element IS1 1 protein InsB (insB1) (Escherichia coli (strain K12)).